The following is a 131-amino-acid chain: MEETMNNQEAPETSEEETVAVENTKAEKVLPNFGPGDTIKVHARIKEGDKERIQMFQGVVLKVKQAADGGNFTVRRISYGVGVERTFPFLSPNVTKVEIMKKGRVRRARLFYLRKLSGKAARIKEVKQTPS.

Over residues 1–11 (MEETMNNQEAP) the composition is skewed to polar residues. Residues 1-20 (MEETMNNQEAPETSEEETVA) form a disordered region.

The protein belongs to the bacterial ribosomal protein bL19 family.

In terms of biological role, this protein is located at the 30S-50S ribosomal subunit interface and may play a role in the structure and function of the aminoacyl-tRNA binding site. The chain is Large ribosomal subunit protein bL19 from Dehalococcoides mccartyi (strain ATCC BAA-2100 / JCM 16839 / KCTC 5957 / BAV1).